Reading from the N-terminus, the 329-residue chain is tRNA-modifying protein YgfZ (329 aa).

Residues W27 and W189 each contribute to the folate site.

Belongs to the tRNA-modifying YgfZ family.

The protein localises to the cytoplasm. Its function is as follows. Folate-binding protein involved in regulating the level of ATP-DnaA and in the modification of some tRNAs. It is probably a key factor in regulatory networks that act via tRNA modification, such as initiation of chromosomal replication. The polypeptide is tRNA-modifying protein YgfZ (Cronobacter sakazakii (strain ATCC BAA-894) (Enterobacter sakazakii)).